A 427-amino-acid chain; its full sequence is Riboflavin transporter rft-1 (427 aa).

Residues 1–2 lie on the Cytoplasmic side of the membrane; it reads MK. Residues 3–23 form a helical membrane-spanning segment; it reads TFLFTFCLVAIFGSSSWIGTN. Topologically, residues 24-42 are extracellular; sequence SVWMELSLLTAKLPEGWNL. A helical membrane pass occupies residues 43-63; sequence PSYLSAIVQIACLGPLIYSII. Topologically, residues 64–73 are cytoplasmic; the sequence is HKGIKMTIPT. A helical transmembrane segment spans residues 74-94; the sequence is VPLIFIFMVLACICQLGLCFF. Residues 95–111 are Extracellular-facing; the sequence is WDDTGYIFGAIRSWPLY. Residues 112–132 traverse the membrane as a helical segment; sequence LLLFGLAIVDAISSVLFLPFM. The Cytoplasmic segment spans residues 133–139; it reads AQFHPSF. Residues 140–160 form a helical membrane-spanning segment; sequence LNAYFVGMGLSALIPSLLSLI. Over 161-184 the chain is Extracellular; that stretch reads QGTSNYWCDDNKTPHYYPPRFSVS. Residues 185 to 205 form a helical membrane-spanning segment; the sequence is MFFLINFFFTCAAVAAFLVLY. At 206–261 the chain is on the cytoplasmic side; it reads KIGAHKNSSQVEPEPKHSIQIIQGDSTTDVNEVNTESSFQETSSIPDSSSATGARL. The helical transmembrane segment at 262-282 threads the bilayer; it reads AFLLLTTALVNAQMNGIVTSV. Over 283–297 the chain is Extracellular; that stretch reads QSYATLVYSQNTYHY. The chain crosses the membrane as a helical span at residues 298-318; it reads AVTLSNVISPLASYLQFFVKI. Residues 319–322 lie on the Cytoplasmic side of the membrane; it reads RSLP. The helical transmembrane segment at 323 to 343 threads the bilayer; sequence ILAFLTLCSSLTTAVIIYLAA. At 344-353 the chain is on the extracellular side; sequence LSPNWIFNSE. Residues 354-374 form a helical membrane-spanning segment; it reads TAGTIISIASSLIAAGLHSYL. Residues 375–391 are Cytoplasmic-facing; sequence RVMFAALLREGNQKESR. Residues 392–412 form a helical membrane-spanning segment; it reads LFWCGAFIQIGSFTGSAIMFP. At 413–427 the chain is on the extracellular side; sequence LVNVWKLFHSAPSCR.

Belongs to the riboflavin transporter family. As to expression, expressed in intestine.

Its subcellular location is the cell membrane. It carries out the reaction riboflavin(in) = riboflavin(out). Activity is strongly inhibited by riboflavin analogs, such as lumiflavin and lumichrome. Riboflavin transporter. Riboflavin transport is Na(+)-independent but pH-sensitive. The polypeptide is Riboflavin transporter rft-1 (Caenorhabditis elegans).